An 844-amino-acid polypeptide reads, in one-letter code: Protein translocase subunit SecA (844 aa).

ATP-binding positions include Q87, 105–109 (GEGKT), and D495. Residues 783-800 (QAPPEELKQEFKHKEEPK) show a composition bias toward basic and acidic residues. Residues 783–844 (QAPPEELKQE…GQKYKKCCGA (62 aa)) form a disordered region. Residues 802–811 (LNYSGAQKET) are compositionally biased toward polar residues. Positions 816–826 (PERRGEPKVGR) are enriched in basic and acidic residues. Zn(2+)-binding residues include C830, C832, C841, and C842.

This sequence belongs to the SecA family. As to quaternary structure, monomer and homodimer. Part of the essential Sec protein translocation apparatus which comprises SecA, SecYEG and auxiliary proteins SecDF-YajC and YidC. Zn(2+) serves as cofactor.

The protein resides in the cell inner membrane. It is found in the cytoplasm. It carries out the reaction ATP + H2O + cellular proteinSide 1 = ADP + phosphate + cellular proteinSide 2.. Part of the Sec protein translocase complex. Interacts with the SecYEG preprotein conducting channel. Has a central role in coupling the hydrolysis of ATP to the transfer of proteins into and across the cell membrane, serving as an ATP-driven molecular motor driving the stepwise translocation of polypeptide chains across the membrane. The sequence is that of Protein translocase subunit SecA from Nitratidesulfovibrio vulgaris (strain DSM 19637 / Miyazaki F) (Desulfovibrio vulgaris).